A 525-amino-acid polypeptide reads, in one-letter code: Probable protein kinase UbiB (525 aa).

The region spanning 118–500 is the Protein kinase domain; sequence EFERVPVASA…QRRTNRLLQA (383 aa). Residues 124-132 and K150 contribute to the ATP site; that span reads VASASIAQV. The active-site Proton acceptor is D285. The helical transmembrane segment at 501 to 521 threads the bilayer; sequence LLVFGLAVGAGAVIARVLIVL.

This sequence belongs to the ABC1 family. UbiB subfamily.

It localises to the cell inner membrane. The protein operates within cofactor biosynthesis; ubiquinone biosynthesis [regulation]. Its function is as follows. Is probably a protein kinase regulator of UbiI activity which is involved in aerobic coenzyme Q (ubiquinone) biosynthesis. The sequence is that of Probable protein kinase UbiB from Burkholderia mallei (strain SAVP1).